Reading from the N-terminus, the 152-residue chain is Complexin (152 aa).

Residues 1–119 (MAAFIAKQMV…EEEDDDEFAK (119 aa)) form a disordered region. Residues 23 to 39 (DEGEKEGNENAEEEAAA) are compositionally biased toward acidic residues. Composition is skewed to basic and acidic residues over residues 41 to 82 (EEAR…VKEE) and 90 to 104 (DEGR…KEEL). The interval 59–75 (EEEREEMRQTIRDKYGL) is interaction with the SNARE complex. C149 is subject to Cysteine methyl ester. C149 carries the S-farnesyl cysteine lipid modification. Residues 150–152 (SLQ) constitute a propeptide, removed in mature form.

The protein belongs to the complexin/synaphin family. In terms of assembly, binds to the SNARE core complex containing SNAP25, synaptobrevin and syntaxin-1.

It is found in the membrane. Its subcellular location is the cytoplasm. The protein resides in the cytosol. Positively regulates a late step in synaptic vesicle exocytosis. The protein is Complexin (cpx) of Doryteuthis pealeii (Longfin inshore squid).